The following is a 74-amino-acid chain: Tau-AnmTx Ueq 12-1 (74 aa).

An N-terminal signal peptide occupies residues M1–S18. Positions A19–K27 are cleaved as a propeptide — removed in mature form. 5 disulfides stabilise this stretch: C30/C37, C40/C71, C46/C64, C51/C72, and C58/C73.

Belongs to the Cnidaria small cysteine-rich protein (SCRiP) family. Detected in mucus secreted from ectoderm.

The protein resides in the secreted. In terms of biological role, potentiates activation of mammalian TRPA1, a non-selective cation channel involved in perception of pain, in vitro yet has an analgesic and anti-inflammatory effect in vivo. Has antibacterial activity against C.glutamicum (MIC=50 uM) and, to a lesser extent, against S.aureus but not against P.aeruginosa or E.coli. This is Tau-AnmTx Ueq 12-1 from Urticina eques (Sea anemone).